The chain runs to 300 residues: GTPase Era (300 aa).

The region spanning 4-172 (KSGFVALAGK…LEKIKEELPE (169 aa)) is the Era-type G domain. A G1 region spans residues 12 to 19 (GKPNVGKS). 12-19 (GKPNVGKS) provides a ligand contact to GTP. A G2 region spans residues 38–42 (QTTRN). The interval 59-62 (DTPG) is G3. Residues 59–63 (DTPGI) and 121–124 (NKID) contribute to the GTP site. A G4 region spans residues 121–124 (NKID). The G5 stretch occupies residues 151–153 (ISA). Positions 195 to 280 (IREKIFHLTR…YLDLNVKVKE (86 aa)) constitute a KH type-2 domain.

It belongs to the TRAFAC class TrmE-Era-EngA-EngB-Septin-like GTPase superfamily. Era GTPase family. In terms of assembly, monomer.

It localises to the cytoplasm. It is found in the cell inner membrane. Functionally, an essential GTPase that binds both GDP and GTP, with rapid nucleotide exchange. Plays a role in 16S rRNA processing and 30S ribosomal subunit biogenesis and possibly also in cell cycle regulation and energy metabolism. The sequence is that of GTPase Era from Thermotoga petrophila (strain ATCC BAA-488 / DSM 13995 / JCM 10881 / RKU-1).